Reading from the N-terminus, the 223-residue chain is N-terminal Xaa-Pro-Lys N-methyltransferase 1 (223 aa).

At Met1 the chain carries N-acetylmethionine. Thr2 is modified (N-acetylthreonine; in N-terminal Xaa-Pro-Lys N-methyltransferase 1, N-terminally processed). S-adenosyl-L-methionine is bound by residues Gly69, Arg74, 91-93 (DVT), 119-120 (LQ), and Gln135.

Belongs to the methyltransferase superfamily. NTM1 family.

Its subcellular location is the nucleus. It carries out the reaction N-terminal L-alanyl-L-prolyl-L-lysyl-[protein] + 3 S-adenosyl-L-methionine = N-terminal N,N,N-trimethyl-L-alanyl-L-prolyl-L-lysyl-[protein] + 3 S-adenosyl-L-homocysteine + 3 H(+). The enzyme catalyses N-terminal L-seryl-L-prolyl-L-lysyl-[protein] + 3 S-adenosyl-L-methionine = N-terminal N,N,N-trimethyl-L-seryl-L-prolyl-L-lysyl-[protein] + 3 S-adenosyl-L-homocysteine + 3 H(+). It catalyses the reaction N-terminal L-prolyl-L-prolyl-L-lysyl-[protein] + 2 S-adenosyl-L-methionine = N-terminal N,N-dimethyl-L-prolyl-L-prolyl-L-lysyl-[protein] + 2 S-adenosyl-L-homocysteine + 2 H(+). Its function is as follows. Distributive alpha-N-methyltransferase that methylates the N-terminus of target proteins containing the N-terminal motif [Ala/Gly/Pro/Ser]-Pro-Lys when the initiator Met is cleaved. Specifically catalyzes mono-, di- or tri-methylation of the exposed alpha-amino group of the Ala, Gly or Ser residue in the [Ala/Gly/Ser]-Pro-Lys motif and mono- or di-methylation of Pro in the Pro-Pro-Lys motif. Some of the substrates may be primed by NTMT2-mediated monomethylation. Catalyzes the trimethylation of the N-terminal Gly in CENPA (after removal of Met-1). Responsible for the N-terminal methylation of KLHL31, MYL2, MYL3, RB1, RCC1, RPL23A and SET. Required during mitosis for normal bipolar spindle formation and chromosome segregation via its action on RCC1. In Bos taurus (Bovine), this protein is N-terminal Xaa-Pro-Lys N-methyltransferase 1 (NTMT1).